Consider the following 362-residue polypeptide: Manganese peroxidase 3 (362 aa).

Positions 1–18 are cleaved as a signal peptide; sequence MAFKQLLTAISIVSVANA. Residues 19 to 23 constitute a propeptide that is removed on maturation; the sequence is ALTRR. 4 disulfide bridges follow: cysteine 26/cysteine 39, cysteine 38/cysteine 309, cysteine 58/cysteine 144, and cysteine 273/cysteine 338. Residues glutamate 60 and glutamate 64 each coordinate Mn(2+). The active-site Proton acceptor is the histidine 71. Aspartate 72, glycine 90, aspartate 92, and serine 94 together coordinate Ca(2+). An N-linked (GlcNAc...) asparagine glycan is attached at asparagine 126. Histidine 200 serves as a coordination point for heme b. Threonine 201 is a binding site for Ca(2+). Aspartate 206 serves as a coordination point for Mn(2+). Aspartate 218, threonine 220, isoleucine 223, and aspartate 225 together coordinate Ca(2+). The tract at residues 341 to 362 is disordered; that stretch reads TPFPSLSADPGPATSVAPVPPS.

Belongs to the peroxidase family. Ligninase subfamily. Requires heme b as cofactor. Ca(2+) is required as a cofactor.

Its subcellular location is the secreted. The catalysed reaction is 2 Mn(2+) + H2O2 + 2 H(+) = 2 Mn(3+) + 2 H2O. Its function is as follows. Catalyzes the oxidation of Mn(2+) to Mn(3+). The latter, acting as a diffusible redox mediator, is capable of oxidizing a variety of lignin compounds. This isozyme is also able to oxidize phenols and amines in the absence of Mn(2+), similar to versatile peroxidases. The chain is Manganese peroxidase 3 (mnp3) from Phlebia radiata (White-rot fungus).